The primary structure comprises 106 residues: UPF0145 protein azo0572 (106 aa).

The protein belongs to the UPF0145 family.

The sequence is that of UPF0145 protein azo0572 from Azoarcus sp. (strain BH72).